The primary structure comprises 708 residues: MTERRRDELSEEINNLREKVMKQSEENNNLQSQVQKLTEENTTLREQVEPTPEDEDDDIELRGAAAAAAPPPPIEEECPEDLPEKFDGNPDMLAPFMAQCQIFMEKSTRDFSVDRVRVCFVTSMMTGRAARWASAKLERSHYLMHNYPAFMMEMKHVFEDPQRREVAKRKIRRLRQGMGSVIDYSNAFQMIAQDLDWNEPALIDQYHEGLSDHIQEELSHLEVAKSLSALIGQCIHIERRLARAAAARKPRSPPRALVLPHIASHHQVDPTEPVGGARMRLTQEEKERRRKLNLCLYCGTGGHYADNCPAKASKSSPAGKLPGPAVEGPSATGPEIIRSPQDDASSPHLQVMLQIHLPGRHTLFVRAMIDSGASGNFIDHEYVAQNGIPLRIKDWPILVEAIDGRPIASGPVVHETHDLIVDLGDHREVLSFDVTQSPFFPVVLGVRWLSTHDPNITWSTRSIVFDSEYCRYHCRMYSPIPPSLPPPAPQPPLYYPVDGYRVYQPVRYYYVQNVYTPVDEHVYPDHRLVDPHIEMIPGAHSIPSGHVYSLSEPEMAALRDFVARNVKDGLITPTIAPNGAQVLQVKRGWKLQVSYDCRAPNNFTIQNQYPRLSIPNLEDQAHLATYTEFVPQIPGYQTYPTYAAYPTYPVGFAWYPVGRDGQGRSLYVPVMITWNPHWYRQPPVPQYPPPQPPPPPPPPPPPPSYSTL.

The stretch at 1–50 (MTERRRDELSEEINNLREKVMKQSEENNNLQSQVQKLTEENTTLREQVEP) forms a coiled coil. The tract at residues 21–74 (MKQSEENNNLQSQVQKLTEENTTLREQVEPTPEDEDDDIELRGAAAAAAPPPPI) is disordered. Residues 26-36 (ENNNLQSQVQK) are compositionally biased toward polar residues. The span at 37 to 48 (LTEENTTLREQV) shows a compositional bias: basic and acidic residues. Residues 76–275 (EECPEDLPEK…HQVDPTEPVG (200 aa)) form a necessary for interaction with ACVRL1 region. The CCHC-type zinc finger occupies 293-310 (NLCLYCGTGGHYADNCPA). The disordered stretch occupies residues 310–344 (AKASKSSPAGKLPGPAVEGPSATGPEIIRSPQDDA). Glycyl lysine isopeptide (Lys-Gly) (interchain with G-Cter in ubiquitin) cross-links involve residues lysine 311 and lysine 314. Phosphoserine occurs at positions 316 and 321. Residues arginine 507, arginine 598, and arginine 611 each carry the omega-N-methylarginine modification. The segment at 683–708 (PVPQYPPPQPPPPPPPPPPPPSYSTL) is disordered.

Homooligomer; homooligomerizes into virion-like capsids. Interacts with ACVRL1. Interacts with SIAH1 and SIAH2. Undergoes proteolytic cleavage. As to expression, expressed in the cytotrophoblast layer but not in the overlying syncytiotrophoblast of the placenta. Expressed in prostate and breast carcinomas but not in normal breast and prostate epithelial cells. Expressed in the Hep-G2 cell line (at protein level). Expressed in brain, liver, spleen, kidney, thymus, lung, ovary, testis, reactive lymph node, skeletal muscle, adipose tissue and placenta. Expressed in pancreatic and hepatocellular carcinomas (HCC).

The protein resides in the extracellular vesicle membrane. Its subcellular location is the cytoplasm. It is found in the nucleus. Retrotransposon-derived protein that binds its own mRNA and self-assembles into virion-like capsids. Forms virion-like extracellular vesicles that encapsulate their own mRNA and are released from cells, enabling intercellular transfer of PEG10 mRNA. Binds its own mRNA in the 5'-UTR region, in the region near the boundary between the nucleocapsid (NC) and protease (PRO) coding sequences and in the beginning of the 3'-UTR region. Involved in placenta formation: required for trophoblast stem cells differentiation. Involved at the immediate early stage of adipocyte differentiation. Overexpressed in many cancers and enhances tumor progression: promotes cell proliferation by driving cell cycle progression from G0/G1. Enhances cancer progression by inhibiting the TGF-beta signaling, possibly via interaction with the TGF-beta receptor ACVRL1. May bind to the 5'-GCCTGTCTTT-3' DNA sequence of the MB1 domain in the myelin basic protein (MBP) promoter; additional evidences are however required to confirm this result. This chain is Retrotransposon-derived protein PEG10, found in Homo sapiens (Human).